The following is a 596-amino-acid chain: Aspartate--tRNA(Asp/Asn) ligase (596 aa).

Glu-173 is an L-aspartate binding site. Positions 197–200 are aspartate; sequence QLFK. Arg-219 lines the L-aspartate pocket. Residues 219–221 and Gln-228 contribute to the ATP site; that span reads RDE. Position 450 (His-450) interacts with L-aspartate. Glu-485 serves as a coordination point for ATP. Residue Arg-492 participates in L-aspartate binding. 537–540 contributes to the ATP binding site; that stretch reads GLDR.

This sequence belongs to the class-II aminoacyl-tRNA synthetase family. Type 1 subfamily. As to quaternary structure, homodimer.

The protein localises to the cytoplasm. It carries out the reaction tRNA(Asx) + L-aspartate + ATP = L-aspartyl-tRNA(Asx) + AMP + diphosphate. In terms of biological role, aspartyl-tRNA synthetase with relaxed tRNA specificity since it is able to aspartylate not only its cognate tRNA(Asp) but also tRNA(Asn). Reaction proceeds in two steps: L-aspartate is first activated by ATP to form Asp-AMP and then transferred to the acceptor end of tRNA(Asp/Asn). This Hydrogenovibrio crunogenus (strain DSM 25203 / XCL-2) (Thiomicrospira crunogena) protein is Aspartate--tRNA(Asp/Asn) ligase.